The chain runs to 660 residues: Translation factor GUF1 homolog, mitochondrial (660 aa).

A tr-type G domain is found at 62 to 243 (EKIRNFSIIA…TIIEKIPPPT (182 aa)). GTP-binding positions include 71–78 (AHIDHGKS), 136–140 (DTPGH), and 190–193 (NKID).

The protein belongs to the TRAFAC class translation factor GTPase superfamily. Classic translation factor GTPase family. LepA subfamily.

It is found in the mitochondrion inner membrane. It carries out the reaction GTP + H2O = GDP + phosphate + H(+). Promotes mitochondrial protein synthesis. May act as a fidelity factor of the translation reaction, by catalyzing a one-codon backward translocation of tRNAs on improperly translocated ribosomes. Binds to mitochondrial ribosomes in a GTP-dependent manner. The polypeptide is Translation factor GUF1 homolog, mitochondrial (Trichoplax adhaerens (Trichoplax reptans)).